Consider the following 273-residue polypeptide: L-cysteine S-thiosulfotransferase subunit SoxA (273 aa).

An N-terminal signal peptide occupies residues 1–24; sequence MKKTVTAVALLCALSSTAIAPTFA. A disulfide bridge connects residues Cys74 and Cys110. Positions 162–273 constitute a Cytochrome c domain; it reads EMYELGKRMF…GVMLTPGIKR (112 aa). Heme-binding residues include Cys182 and His186. Arg230 serves as a coordination point for substrate. Cys234 lines the heme pocket. Residue Cys234 is the Cysteine persulfide intermediate of the active site.

Belongs to the SoxA family. Heterodimer of SoxA and SoxX. Requires heme as cofactor. Post-translationally, cysteine persulfide at Cys-234.

It is found in the periplasm. It catalyses the reaction L-cysteinyl-[SoxY protein] + thiosulfate + 2 Fe(III)-[cytochrome c] = S-sulfosulfanyl-L-cysteinyl-[SoxY protein] + 2 Fe(II)-[cytochrome c] + 2 H(+). The enzyme catalyses S-sulfanyl-L-cysteinyl-[SoxY protein] + thiosulfate + 2 Fe(III)-[cytochrome c] = S-(2-sulfodisulfanyl)-L-cysteinyl-[SoxY protein] + 2 Fe(II)-[cytochrome c] + 2 H(+). Its function is as follows. C-type monoheme cytochrome, which is part of the SoxAX cytochrome complex involved in sulfur oxidation. The SoxAX complex catalyzes the formation of a heterodisulfide bond between the conserved cysteine residue on a sulfur carrier SoxYZ complex subunit SoxY and thiosulfate or other inorganic sulfur substrates. This leads to the liberation of two electrons, which may be transferred from the SoxAX complex to another cytochrome c that then channels them into the respiratory electron transport chain. Some electrons may be used for reductive CO(2) fixation. In Hydrogenophilus thermoluteolus (Pseudomonas hydrogenothermophila), this protein is L-cysteine S-thiosulfotransferase subunit SoxA.